The chain runs to 145 residues: Photosystem I reaction center subunit VI-1, chloroplastic (145 aa).

The transit peptide at M1–A50 directs the protein to the chloroplast. A helical transmembrane segment spans residues L102 to V118.

Belongs to the psaH family.

It localises to the plastid. Its subcellular location is the chloroplast thylakoid membrane. Its function is as follows. Possible role could be the docking of the LHC I antenna complex to the core complex. This Arabidopsis thaliana (Mouse-ear cress) protein is Photosystem I reaction center subunit VI-1, chloroplastic (PSAH1).